A 652-amino-acid chain; its full sequence is Probable serine/threonine-protein kinase mkcD (652 aa).

Disordered stretches follow at residues 1 to 47 (MNNI…RKNK), 163 to 198 (NPID…LTNV), and 257 to 289 (QQKL…TLSP). Positions 182 to 191 (NGGGSGGGGD) are enriched in gly residues. The stretch at 231–275 (KNNQNLHHKQQQLQQLQQLKQQHLQQQQKLKQEQQQEQQQQQEDE) forms a coiled coil. Over residues 257–271 (QQKLKQEQQQEQQQQ) the composition is skewed to low complexity. Residues 279–289 (SPVSTSSTLSP) are compositionally biased toward polar residues. The Protein kinase domain maps to 369–626 (FKNLDFEARG…SSQLLQHPFL (258 aa)). ATP-binding positions include 375-383 (EARGGFGSV) and Lys403. Residue Asp494 is the Proton acceptor of the active site.

Belongs to the protein kinase superfamily. STE Ser/Thr protein kinase family. STE20 subfamily. Mg(2+) is required as a cofactor.

The enzyme catalyses L-seryl-[protein] + ATP = O-phospho-L-seryl-[protein] + ADP + H(+). It catalyses the reaction L-threonyl-[protein] + ATP = O-phospho-L-threonyl-[protein] + ADP + H(+). In Dictyostelium discoideum (Social amoeba), this protein is Probable serine/threonine-protein kinase mkcD.